We begin with the raw amino-acid sequence, 704 residues long: Structure-specific endonuclease subunit SLX1 homolog (704 aa).

Positions 4-90 (RFHCVYLLTS…TASARLRHTI (87 aa)) constitute a GIY-YIG domain. Disordered stretches follow at residues 157 to 180 (ESPRVGTQQHSQRSSSLQGQADGV), 290 to 323 (ASFASDSDDEDTRRLAPYCPSAGSSTPSPQRVRT), and 354 to 378 (GAALRSFSSPPPPRESSPRSASRPP). Polar residues-rich tracts occupy residues 161–175 (VGTQQHSQRSSSLQG) and 311–320 (AGSSTPSPQR). The SLX1-type zinc finger occupies 446 to 526 (CSLCALPLQP…PSQPCPCPLC (81 aa)). Disordered regions lie at residues 601-629 (VPGAASTVPAPTMHAGPARRDAPRVSSPI) and 650-671 (ASLAALSPTSASPISRHNGHSN). The segment covering 650 to 662 (ASLAALSPTSASP) has biased composition (low complexity).

It belongs to the SLX1 family. As to quaternary structure, forms a heterodimer with a member of the SLX4 family. The cofactor is a divalent metal cation.

The protein resides in the nucleus. In terms of biological role, catalytic subunit of a heterodimeric structure-specific endonuclease that resolves DNA secondary structures generated during DNA repair and recombination. Has endonuclease activity towards branched DNA substrates, introducing single-strand cuts in duplex DNA close to junctions with ss-DNA. The chain is Structure-specific endonuclease subunit SLX1 homolog from Leishmania major.